We begin with the raw amino-acid sequence, 317 residues long: Sulfate adenylyltransferase subunit 2 (317 aa).

Disordered regions lie at residues 1-21 and 298-317; these read MPDSRPDTELSNPQSAKAPLD and RAIDRDQSGSMEKKKREGYF.

The protein belongs to the PAPS reductase family. CysD subfamily. In terms of assembly, heterodimer composed of CysD, the smaller subunit, and CysN.

It carries out the reaction sulfate + ATP + H(+) = adenosine 5'-phosphosulfate + diphosphate. It functions in the pathway sulfur metabolism; hydrogen sulfide biosynthesis; sulfite from sulfate: step 1/3. Its function is as follows. With CysN forms the ATP sulfurylase (ATPS) that catalyzes the adenylation of sulfate producing adenosine 5'-phosphosulfate (APS) and diphosphate, the first enzymatic step in sulfur assimilation pathway. APS synthesis involves the formation of a high-energy phosphoric-sulfuric acid anhydride bond driven by GTP hydrolysis by CysN coupled to ATP hydrolysis by CysD. This Rhizobium etli (strain ATCC 51251 / DSM 11541 / JCM 21823 / NBRC 15573 / CFN 42) protein is Sulfate adenylyltransferase subunit 2.